Reading from the N-terminus, the 134-residue chain is Putative F-box protein R638 (134 aa).

One can recognise an F-box domain in the interval 5-52 (NIMNLLNEDCILHILSFLADKDKIQLSLSCKSNLKFLHKTIYDDIYFY).

This chain is Putative F-box protein R638, found in Acanthamoeba polyphaga mimivirus (APMV).